Reading from the N-terminus, the 215-residue chain is Cytochrome b6 (215 aa).

Residues 32-52 (IFYCLGGITFTLFLVQVATGF) traverse the membrane as a helical segment. C35 is a heme c binding site. The heme b site is built by H86 and H100. The next 3 membrane-spanning stretches (helical) occupy residues 90–110 (ASMM…TGGF), 116–136 (LTWI…VTGY), and 186–206 (LHTF…FLMI). Heme b is bound by residues H187 and H202.

The protein belongs to the cytochrome b family. PetB subfamily. In terms of assembly, the 4 large subunits of the cytochrome b6-f complex are cytochrome b6, subunit IV (17 kDa polypeptide, PetD), cytochrome f and the Rieske protein, while the 4 small subunits are PetG, PetL, PetM and PetN. The complex functions as a dimer. Heme b serves as cofactor. It depends on heme c as a cofactor.

It localises to the plastid. It is found in the chloroplast thylakoid membrane. In terms of biological role, component of the cytochrome b6-f complex, which mediates electron transfer between photosystem II (PSII) and photosystem I (PSI), cyclic electron flow around PSI, and state transitions. The sequence is that of Cytochrome b6 from Tupiella akineta (Green alga).